A 268-amino-acid chain; its full sequence is Inositol polyphosphate multikinase (268 aa).

Residues Lys27, 86–88 (ENI), and Asp99 each bind ATP. Substrate is bound at residue 127 to 135 (TSGSLGFRI). Position 235 (Asp235) interacts with ATP.

It belongs to the inositol phosphokinase (IPK) family.

It is found in the cytoplasm. The protein resides in the nucleus. The enzyme catalyses 1D-myo-inositol 1,4,5-trisphosphate + 2 ATP = 1D-myo-inositol 1,3,4,5,6-pentakisphosphate + 2 ADP + 2 H(+). It catalyses the reaction 1D-myo-inositol 1,4,5-trisphosphate + ATP = 1D-myo-inositol 1,4,5,6-tetrakisphosphate + ADP + H(+). It carries out the reaction 1D-myo-inositol 1,4,5-trisphosphate + ATP = 1D-myo-inositol 1,3,4,5-tetrakisphosphate + ADP + H(+). The catalysed reaction is 1D-myo-inositol 1,4,5,6-tetrakisphosphate + ATP = 1D-myo-inositol 1,3,4,5,6-pentakisphosphate + ADP + H(+). Inositol phosphate kinase with both monophosphoinositol and diphosphoinositol polyphosphate synthase activities. Able to phosphorylate inositol 1,4,5-trisphosphate (Ins(1,4,5)P3) on both the carbon-3 and carbon-6 positions to synthesize inositol 1,3,4,5-tetrakisphosphate (Ins(1,3,4,5)P4) and inositol 1,4,5,6-tetrakisphosphate (Ins(1,4,5,6)P4), and then to subsequently phosphorylate and convert either isomer of InsP4 to inositol 1,3,4,5,6-pentakisphosphate (Ins(1,3,4,5,6)P5). Also converts (Ins(1,3,4,5,6)P5) to InsP6. Also has a role in transcription regulation. The catalytic activity is required for PHO gene repression by phosphate and for NCR gene activation in response to nitrogen availability, indicating a role for inositol pyrophosphates in these controls. Inositol polyphosphates may be involved in the regulation of chromatin remodeling of transcription. The sequence is that of Inositol polyphosphate multikinase (arg82) from Schizosaccharomyces pombe (strain 972 / ATCC 24843) (Fission yeast).